We begin with the raw amino-acid sequence, 142 residues long: MTDRLTQLQQCLDQIVEQFGSAITYVDRNHDFEPHNELEDKLSDPQATIAAAEDFDRNIDELTTDMILKTRQIIKLIDSLPGVDVSAEEQLSRIDSLQKKLIQVEGEKIEAIKRKESLTKDIEELINEFTEGIANSRRLNKA.

Residues 87–131 (AEEQLSRIDSLQKKLIQVEGEKIEAIKRKESLTKDIEELINEFTE) are a coiled coil.

Belongs to the Mediator complex subunit 21 family. In terms of assembly, component of the Mediator complex.

The protein resides in the nucleus. In terms of biological role, component of the Mediator complex, a coactivator involved in the regulated transcription of nearly all RNA polymerase II-dependent genes. Mediator functions as a bridge to convey information from gene-specific regulatory proteins to the basal RNA polymerase II transcription machinery. Mediator is recruited to promoters by direct interactions with regulatory proteins and serves as a scaffold for the assembly of a functional preinitiation complex with RNA polymerase II and the general transcription factors. In Eremothecium gossypii (strain ATCC 10895 / CBS 109.51 / FGSC 9923 / NRRL Y-1056) (Yeast), this protein is Mediator of RNA polymerase II transcription subunit 21 (SRB7).